The sequence spans 214 residues: Thiamine-phosphate synthase (214 aa).

Residues 38–42 (QLREK) and N70 each bind 4-amino-2-methyl-5-(diphosphooxymethyl)pyrimidine. Mg(2+)-binding residues include D71 and D90. 4-amino-2-methyl-5-(diphosphooxymethyl)pyrimidine is bound by residues S109 and K138. Position 165 (G165) interacts with 2-[(2R,5Z)-2-carboxy-4-methylthiazol-5(2H)-ylidene]ethyl phosphate.

The protein belongs to the thiamine-phosphate synthase family. Mg(2+) is required as a cofactor.

The enzyme catalyses 2-[(2R,5Z)-2-carboxy-4-methylthiazol-5(2H)-ylidene]ethyl phosphate + 4-amino-2-methyl-5-(diphosphooxymethyl)pyrimidine + 2 H(+) = thiamine phosphate + CO2 + diphosphate. It carries out the reaction 2-(2-carboxy-4-methylthiazol-5-yl)ethyl phosphate + 4-amino-2-methyl-5-(diphosphooxymethyl)pyrimidine + 2 H(+) = thiamine phosphate + CO2 + diphosphate. It catalyses the reaction 4-methyl-5-(2-phosphooxyethyl)-thiazole + 4-amino-2-methyl-5-(diphosphooxymethyl)pyrimidine + H(+) = thiamine phosphate + diphosphate. It functions in the pathway cofactor biosynthesis; thiamine diphosphate biosynthesis; thiamine phosphate from 4-amino-2-methyl-5-diphosphomethylpyrimidine and 4-methyl-5-(2-phosphoethyl)-thiazole: step 1/1. In terms of biological role, condenses 4-methyl-5-(beta-hydroxyethyl)thiazole monophosphate (THZ-P) and 2-methyl-4-amino-5-hydroxymethyl pyrimidine pyrophosphate (HMP-PP) to form thiamine monophosphate (TMP). This is Thiamine-phosphate synthase from Caldanaerobacter subterraneus subsp. tengcongensis (strain DSM 15242 / JCM 11007 / NBRC 100824 / MB4) (Thermoanaerobacter tengcongensis).